A 92-amino-acid chain; its full sequence is Small ribosomal subunit protein uS19 (92 aa).

It belongs to the universal ribosomal protein uS19 family.

Protein S19 forms a complex with S13 that binds strongly to the 16S ribosomal RNA. This is Small ribosomal subunit protein uS19 from Rickettsia felis (strain ATCC VR-1525 / URRWXCal2) (Rickettsia azadi).